The primary structure comprises 211 residues: Pyridoxine/pyridoxamine 5'-phosphate oxidase (211 aa).

Residues 8 to 11 (RNEY) and K66 contribute to the substrate site. Residues 61 to 66 (RVVLLK), 76 to 77 (FT), K83, and Q105 each bind FMN. Residues Y123, R127, and S131 each coordinate substrate. Residues 140–141 (QS) and W184 each bind FMN. Substrate is bound at residue 190–192 (RLH). Position 194 (R194) interacts with FMN.

It belongs to the pyridoxamine 5'-phosphate oxidase family. As to quaternary structure, homodimer. FMN serves as cofactor.

The enzyme catalyses pyridoxamine 5'-phosphate + O2 + H2O = pyridoxal 5'-phosphate + H2O2 + NH4(+). It carries out the reaction pyridoxine 5'-phosphate + O2 = pyridoxal 5'-phosphate + H2O2. It participates in cofactor metabolism; pyridoxal 5'-phosphate salvage; pyridoxal 5'-phosphate from pyridoxamine 5'-phosphate: step 1/1. Its pathway is cofactor metabolism; pyridoxal 5'-phosphate salvage; pyridoxal 5'-phosphate from pyridoxine 5'-phosphate: step 1/1. Its function is as follows. Catalyzes the oxidation of either pyridoxine 5'-phosphate (PNP) or pyridoxamine 5'-phosphate (PMP) into pyridoxal 5'-phosphate (PLP). The sequence is that of Pyridoxine/pyridoxamine 5'-phosphate oxidase from Mannheimia succiniciproducens (strain KCTC 0769BP / MBEL55E).